The sequence spans 21 residues: Cold shock protein CspSt (21 aa).

Positions 1-21 (KNGTVKWFNAEKGFGFITSED) constitute a CSD domain.

It localises to the cytoplasm. This is Cold shock protein CspSt from Streptococcus thermophilus.